A 276-amino-acid polypeptide reads, in one-letter code: 3-methyl-2-oxobutanoate hydroxymethyltransferase (276 aa).

The Mg(2+) site is built by aspartate 46 and aspartate 85. Residues 46-47, aspartate 85, and lysine 115 each bind 3-methyl-2-oxobutanoate; that span reads DS. Glutamate 117 serves as a coordination point for Mg(2+). Glutamate 184 functions as the Proton acceptor in the catalytic mechanism.

It belongs to the PanB family. In terms of assembly, homodecamer; pentamer of dimers. Mg(2+) serves as cofactor.

It localises to the cytoplasm. The enzyme catalyses 3-methyl-2-oxobutanoate + (6R)-5,10-methylene-5,6,7,8-tetrahydrofolate + H2O = 2-dehydropantoate + (6S)-5,6,7,8-tetrahydrofolate. It participates in cofactor biosynthesis; (R)-pantothenate biosynthesis; (R)-pantoate from 3-methyl-2-oxobutanoate: step 1/2. Functionally, catalyzes the reversible reaction in which hydroxymethyl group from 5,10-methylenetetrahydrofolate is transferred onto alpha-ketoisovalerate to form ketopantoate. The polypeptide is 3-methyl-2-oxobutanoate hydroxymethyltransferase (Heliobacterium modesticaldum (strain ATCC 51547 / Ice1)).